A 446-amino-acid polypeptide reads, in one-letter code: Argininosuccinate lyase (446 aa).

The protein belongs to the lyase 1 family. Argininosuccinate lyase subfamily.

The protein resides in the cytoplasm. The enzyme catalyses 2-(N(omega)-L-arginino)succinate = fumarate + L-arginine. It functions in the pathway amino-acid biosynthesis; L-arginine biosynthesis; L-arginine from L-ornithine and carbamoyl phosphate: step 3/3. This is Argininosuccinate lyase from Parabacteroides distasonis (strain ATCC 8503 / DSM 20701 / CIP 104284 / JCM 5825 / NCTC 11152).